A 2271-amino-acid chain; its full sequence is Serine-rich adhesin for platelets (2271 aa).

An N-terminal signal peptide occupies residues 1-89; sequence MSKRQKAFHD…VNMLHDQQAF (89 aa). The tract at residues 90–230 is serine-rich repeat region 1, SRR1; that stretch reads AASDAPLTSE…KTSTTSTSTA (141 aa). Residues 100–111 show a composition bias toward polar residues; the sequence is LNTQSETVGNQN. The tract at residues 100–229 is disordered; it reads LNTQSETVGN…NKTSTTSTST (130 aa). Residues 112-128 show a composition bias toward low complexity; it reads STTIEASTSTADSTSVT. Over residues 129–140 the composition is skewed to polar residues; the sequence is KNSSSVQTSNSD. Residues 150–229 are compositionally biased toward low complexity; it reads VTSTTNSTSN…NKTSTTSTST (80 aa). Residues 231–751 are non-repeat region (NRR); sequence PVKLRTFSRL…TTFKYEVTRN (521 aa). The segment at 245 to 491 is L-lectin module; it reads FASAATTTAV…QQVQFGTFEY (247 aa). Asp-365, Tyr-367, Asn-369, and Asp-382 together coordinate Ca(2+). A beta-grasp module region spans residues 492–571; the sequence is TESAVTQVRY…NAGQSVTYYF (80 aa). The tract at residues 572–659 is cadherin-like module-1; the sequence is TDVKAPTVTV…KSTTTFTINV (88 aa). The Ca(2+) site is built by Asp-573, Lys-575, Asp-601, Asn-602, Asp-645, Asp-661, Thr-663, Asp-690, Asn-691, and Asp-734. Residues 660-751 form a cadherin-like module-2 region; the sequence is VDTTAPTVTP…TTFKYEVTRN (92 aa). Disordered stretches follow at residues 751–791 and 806–2242; these read NSMS…VVST and SVSA…NGLL. 3 stretches are compositionally biased toward low complexity: residues 752–791, 806–1392, and 1402–2214; these read SMSDSVSTSGSTQQSQSVSTSKADSQSASTSTSGSIVVST, SVSA…LSLS, and SNSA…ATSE. A serine-rich repeat region 2, SRR2 region spans residues 752-2232; the sequence is SMSDSVSTSG…AQSEKRLPDT (1481 aa). Positions 2229–2233 match the LPXTG sorting signal motif; that stretch reads LPDTG. The residue at position 2232 (Thr-2232) is a Pentaglycyl murein peptidoglycan amidated threonine. The propeptide at 2233–2271 is removed by sortase; that stretch reads GDSIKQNGLLGGVMTLLVGLGLMKRKKKKDENDQDDSQA.

The protein belongs to the serine-rich repeat protein (SRRP) family. Proteolytically cleaved by a metalloprotease. Post-translationally, glycosylated. It is probable that most of the Ser residues in SSR1 and SSR2 are O-GlcNAcylated. Sequential glycosylation by sugar transferases are able to generate complex sugar polymorphisms.

Its subcellular location is the secreted. It is found in the cell wall. Mediates binding to human platelets, possibly through a receptor-ligand interaction. Probably associated with virulence in endovascular infection. Plays a positive role in biofilm formation, possibly by self-association via the non-repeat region (NRR or binding region, BR). Binds to and plays a role in human lung epithelial cell invasion via the L-lectin module of its NRR domain; N-acetylneuraminic acid (Neu5Ac) inhibits binding. Treatment of host cells with neuraminidase decreases adherence of S.aureus cells, suggesting SraP recognizes a host terminal Neu5Ac moiety as a receptor. The sequence is that of Serine-rich adhesin for platelets from Staphylococcus aureus (strain NCTC 8325 / PS 47).